The sequence spans 68 residues: Conotoxin TsMMSK-021 (68 aa).

An N-terminal signal peptide occupies residues 1–20; it reads MMSKLGVLLTICLLLFPLTA. The propeptide occupies 21-52; sequence VRLDGDQHTDRPADRMQDIATEQHPLFDPVKR. 3 cysteine pairs are disulfide-bonded: cysteine 53-cysteine 66, cysteine 54-cysteine 62, and cysteine 58-cysteine 65. At proline 64 the chain carries 4-hydroxyproline.

It belongs to the conotoxin M superfamily. Expressed by the venom duct.

The protein resides in the secreted. This is Conotoxin TsMMSK-021 from Conus tessulatus (Tessellate cone).